Reading from the N-terminus, the 127-residue chain is Fluoride-specific ion channel FluC (127 aa).

The next 4 membrane-spanning stretches (helical) occupy residues 4–24, 35–55, 71–91, and 103–123; these read LLLA…MLSM, LGTL…FAWF, TGFC…VFLL, and VLVN…IFSA. Residues G75 and T78 each contribute to the Na(+) site.

Belongs to the fluoride channel Fluc/FEX (TC 1.A.43) family.

It is found in the cell inner membrane. The catalysed reaction is fluoride(in) = fluoride(out). Na(+) is not transported, but it plays an essential structural role and its presence is essential for fluoride channel function. In terms of biological role, fluoride-specific ion channel. Important for reducing fluoride concentration in the cell, thus reducing its toxicity. In Escherichia fergusonii (strain ATCC 35469 / DSM 13698 / CCUG 18766 / IAM 14443 / JCM 21226 / LMG 7866 / NBRC 102419 / NCTC 12128 / CDC 0568-73), this protein is Fluoride-specific ion channel FluC.